A 142-amino-acid polypeptide reads, in one-letter code: MASSGVAGGRQAEDTLQPPPELLPESKPPPPPQPLPVAALPPPAAPRPQSPAGAKEENYSFLPLVHNVIKCMDKDSPDLHQDLNALKTKFQELRKLIGTMPGIHVSPEQQQQQLHSLREQVRTKNELLQKYKSLCMFEIPKD.

The tract at residues 1 to 58 is disordered; sequence MASSGVAGGRQAEDTLQPPPELLPESKPPPPPQPLPVAALPPPAAPRPQSPAGAKEEN. Ala2 carries the post-translational modification N-acetylalanine. A compositionally biased stretch (pro residues) spans 17 to 49; that stretch reads QPPPELLPESKPPPPPQPLPVAALPPPAAPRPQ. Positions 78 to 134 form a coiled coil; the sequence is DLHQDLNALKTKFQELRKLIGTMPGIHVSPEQQQQQLHSLREQVRTKNELLQKYKSL. Ser106 carries the post-translational modification Phosphoserine.

Belongs to the Mediator complex subunit 9 family. Component of the Mediator complex, which is composed of MED1, MED4, MED6, MED7, MED8, MED9, MED10, MED11, MED12, MED13, MED13L, MED14, MED15, MED16, MED17, MED18, MED19, MED20, MED21, MED22, MED23, MED24, MED25, MED26, MED27, MED29, MED30, MED31, CCNC, CDK8 and CDC2L6/CDK11. The MED12, MED13, CCNC and CDK8 subunits form a distinct module termed the CDK8 module. Mediator containing the CDK8 module is less active than Mediator lacking this module in supporting transcriptional activation. Individual preparations of the Mediator complex lacking one or more distinct subunits have been variously termed ARC, CRSP, DRIP, PC2, SMCC and TRAP.

Its subcellular location is the nucleus. Its function is as follows. Component of the Mediator complex, a coactivator involved in the regulated transcription of nearly all RNA polymerase II-dependent genes. Mediator functions as a bridge to convey information from gene-specific regulatory proteins to the basal RNA polymerase II transcription machinery. Mediator is recruited to promoters by direct interactions with regulatory proteins and serves as a scaffold for the assembly of a functional preinitiation complex with RNA polymerase II and the general transcription factors. The sequence is that of Mediator of RNA polymerase II transcription subunit 9 (Med9) from Mus musculus (Mouse).